The primary structure comprises 353 residues: Peptide methionine sulfoxide reductase MsrA/MsrB (353 aa).

A peptide methionine sulfoxide reductase A region spans residues 43–196 (REIYLAGGCF…PNGYCHIDIT (154 aa)). Cysteine 51 is a catalytic residue. In terms of domain architecture, MsrB spans 213-336 (DAELKAKLTP…NSASIKFIPL (124 aa)). The Nucleophile role is filled by cysteine 325.

This sequence in the N-terminal section; belongs to the MsrA Met sulfoxide reductase family. It in the C-terminal section; belongs to the MsrB Met sulfoxide reductase family.

The catalysed reaction is L-methionyl-[protein] + [thioredoxin]-disulfide + H2O = L-methionyl-(S)-S-oxide-[protein] + [thioredoxin]-dithiol. The enzyme catalyses [thioredoxin]-disulfide + L-methionine + H2O = L-methionine (S)-S-oxide + [thioredoxin]-dithiol. It catalyses the reaction L-methionyl-[protein] + [thioredoxin]-disulfide + H2O = L-methionyl-(R)-S-oxide-[protein] + [thioredoxin]-dithiol. In terms of biological role, has an important function as a repair enzyme for proteins that have been inactivated by oxidation. Catalyzes the reversible oxidation-reduction of methionine sulfoxide in proteins to methionine. This is Peptide methionine sulfoxide reductase MsrA/MsrB (msrAB) from Haemophilus influenzae (strain ATCC 51907 / DSM 11121 / KW20 / Rd).